Reading from the N-terminus, the 357-residue chain is Protein AAR2 homolog (357 aa).

This sequence belongs to the AAR2 family.

This Caenorhabditis elegans protein is Protein AAR2 homolog.